A 490-amino-acid chain; its full sequence is GTPase Der (490 aa).

2 EngA-type G domains span residues 3 to 166 (PVVA…VDEI) and 203 to 376 (IKLA…DSST). Residues 9 to 16 (GRPNVGKS), 56 to 60 (DTGGI), 118 to 121 (NKTD), 209 to 216 (GRPNVGKS), 256 to 260 (DTAGV), and 321 to 324 (NKWD) each bind GTP. One can recognise a KH-like domain in the interval 377-461 (RRQSTAMLTR…PIRIQFKEGE (85 aa)).

Belongs to the TRAFAC class TrmE-Era-EngA-EngB-Septin-like GTPase superfamily. EngA (Der) GTPase family. In terms of assembly, associates with the 50S ribosomal subunit.

Its function is as follows. GTPase that plays an essential role in the late steps of ribosome biogenesis. In Enterobacter sp. (strain 638), this protein is GTPase Der.